We begin with the raw amino-acid sequence, 238 residues long: tRNA (guanine-N(7)-)-methyltransferase (238 aa).

S-adenosyl-L-methionine is bound by residues glutamate 68, glutamate 93, aspartate 121, and aspartate 143. Aspartate 143 is an active-site residue. Substrate-binding positions include lysine 147, aspartate 179, and 216 to 219; that span reads TRYE.

This sequence belongs to the class I-like SAM-binding methyltransferase superfamily. TrmB family.

It catalyses the reaction guanosine(46) in tRNA + S-adenosyl-L-methionine = N(7)-methylguanosine(46) in tRNA + S-adenosyl-L-homocysteine. It functions in the pathway tRNA modification; N(7)-methylguanine-tRNA biosynthesis. Its function is as follows. Catalyzes the formation of N(7)-methylguanine at position 46 (m7G46) in tRNA. The protein is tRNA (guanine-N(7)-)-methyltransferase of Paramagnetospirillum magneticum (strain ATCC 700264 / AMB-1) (Magnetospirillum magneticum).